A 416-amino-acid chain; its full sequence is E3 ubiquitin-protein ligase DMA1 (416 aa).

The segment at 1 to 30 (MSTNTVPSSPPNQTPPAASGIATSHDHTKF) is disordered. Glycyl lysine isopeptide (Lys-Gly) (interchain with G-Cter in ubiquitin) cross-links involve residues K150, K204, K217, K237, K240, K260, K300, K306, K313, and K317. The 64-residue stretch at 189–252 (IIIGRYTERV…SGTFLNHQRL (64 aa)) folds into the FHA domain. Residues 327–371 (CSICLNKIKPCQAIFISPCAHSWHFHCVRRLVIMNYPQFMCPNCR) form an RING-type zinc finger.

This sequence belongs to the DMA1 family. Interacts with CDC123. Interacts with PCL1. UBC4-dependent autoubiquitination occurs at Lys-150, Lys-204, Lys-217, Lys-237, Lys-240, Lys-260, Lys-300, Lys-306, Lys-313 and Lys-317. UBC4-dependent autoubiquitination is responsible for DMA2 turnover. UBC13/MMS2-dependent autoubiquitination occurs at Lys-237 and Lys-306. Lys-204 and Lys-306 are also ubiquitinated in trans by DMA2 E3 ligase in association with UBC4.

The protein resides in the cytoplasm. The catalysed reaction is S-ubiquitinyl-[E2 ubiquitin-conjugating enzyme]-L-cysteine + [acceptor protein]-L-lysine = [E2 ubiquitin-conjugating enzyme]-L-cysteine + N(6)-ubiquitinyl-[acceptor protein]-L-lysine.. In terms of biological role, E3 ubiquitin-protein ligase which functions in cell cycle retarding in conjunction with the UBC4 and UBC13/MMS2 complex, 2 E2 ubiquitin conjugating enzymes. Involved in nutritional control of the cell cycle. Targets the G1 cyclin PCL1 for destruction. Required for proper spindle positioning, likely regulating septin ring deposition at the bud neck. The sequence is that of E3 ubiquitin-protein ligase DMA1 from Saccharomyces cerevisiae (strain ATCC 204508 / S288c) (Baker's yeast).